The chain runs to 449 residues: 5'-deoxyadenosine deaminase (449 aa).

Zn(2+)-binding residues include H79 and H81. Residues E108 and H200 each coordinate substrate. H227 serves as a coordination point for Zn(2+). Residues E230 and D316 each coordinate substrate. D316 contacts Zn(2+).

This sequence belongs to the metallo-dependent hydrolases superfamily. MTA/SAH deaminase family. Homotetramer. It depends on Zn(2+) as a cofactor.

The enzyme catalyses 5'-deoxyadenosine + H2O + H(+) = 5'-deoxyinosine + NH4(+). It carries out the reaction S-adenosyl-L-homocysteine + H2O + H(+) = S-inosyl-L-homocysteine + NH4(+). It catalyses the reaction S-methyl-5'-thioadenosine + H2O + H(+) = S-methyl-5'-thioinosine + NH4(+). The catalysed reaction is adenosine + H2O + H(+) = inosine + NH4(+). It participates in amino-acid biosynthesis; S-adenosyl-L-methionine biosynthesis. Its function is as follows. Catalyzes the deamination of three SAM-derived enzymatic products, namely 5'-deoxyadenosine, S-adenosyl-L-homocysteine, and 5'-methylthioadenosine, to produce the inosine analogs. Can also deaminate adenosine. The preferred substrate for this enzyme is 5'-deoxyadenosine, but all these substrates are efficiently deaminated. Likely functions in a S-adenosyl-L-methionine (SAM) recycling pathway from S-adenosyl-L-homocysteine (SAH) produced from SAM-dependent methylation reactions. May also be involved in the recycling of 5'-deoxyadenosine, whereupon the 5'-deoxyribose moiety of 5'-deoxyinosine is further metabolized to deoxyhexoses used for the biosynthesis of aromatic amino acids in methanogens. The chain is 5'-deoxyadenosine deaminase from Methanospirillum hungatei JF-1 (strain ATCC 27890 / DSM 864 / NBRC 100397 / JF-1).